A 1115-amino-acid polypeptide reads, in one-letter code: MPRRTDLHHVLVIGSGPIVIGQACEFDYSGTQACRVLRAEGLQVSLVNSNPATIMTDPEFADHTYVEPITPAFVERVIAQQAERGNKIDALLATLGGQTALNTAVALYESGVLEKYGVELIGADFDAIQRGEDRQRFKDIVAKAGGESARSRVCFTMAEVRETVAELGLPVVVRPSFTMGGLGSGIAYSTDEVDRMAGAGLAASPSANVLIEESIYGWKEFELELMRDGHDNVVVVCSIENVDPMGVHTGDSVTVAPAMTLTDREYQRMRDLGIAILREVGVDTGGCNIQFAVNPRDGRLIVIEMNPRVSRSSALASKATGFPIAKIAAKLAIGYTLDEIVNDITGETPACFEPTLDYVVVKAPRFAFEKFPGADPTLTTTMKSVGEAMSLGRNFVEALGKVMRSLETTRAGFWTAPDPDGGIEEALTRLRTPAEGRLYDIELALRLGATVERVAEASGVDPWFIAQINELVNLRNELVAAPVLNAELLRRAKHSGLSDHQIASLRPELAGEAGVRSLRVRLGIHPVYKTVDTCAAEFEAQTPYHYSSYELDPAAETEVAPQTERPKVLILGSGPNRIGQGIEFDYSCVHAATTLSQAGFETVMVNCNPETVSTDYDTADRLYFEPLTFEDVLEVYHAEMESGSGGPGVAGVIVQLGGQTPLGLAHRLADAGVPIVGTPPEAIDLAEDRGAFGDLLSAAGLPAPKYGTATTFAQARRIAEEIGYPVLVRPSYVLGGRGMEIVYDEETLQGYITRATQLSPEHPVLVDRFLEDAVEIDVDALCDGAEVYIGGIMEHIEEAGIHSGDSACALPPVTLGRSDIEKVRKATEAIAHGIGVVGLLNVQYALKDDVLYVLEANPRASRTVPFVSKATAVPLAKACARIMLGATIAQLRAEGLLAVTGDGAHAARNAPIAVKEAVLPFHRFRRADGAAIDSLLGPEMKSTGEVMGIDRDFGSAFAKSQTAAYGSLPAQGTVFVSVANRDKRSLVFPVKRLADLGFRVLATEGTAEMLRRNGIPCDDVRKHFEPAQPGRPTMSAVDAIRAGEVNMVINTPYGNSGPRIDGYEIRSAAVAGNIPCITTVQGASAAVQGIEAGIRGDIGVRSLQELHRVIGGVER.

Positions Met-1–Glu-407 are carboxyphosphate synthetic domain. Arg-134, Arg-174, Gly-180, Gly-181, Glu-213, Ile-215, Glu-220, Gly-246, Val-247, His-248, Gln-290, and Glu-304 together coordinate ATP. Residues Lys-138 to Ile-333 enclose the ATP-grasp 1 domain. Mg(2+) contacts are provided by Gln-290, Glu-304, and Asn-306. Mn(2+)-binding residues include Gln-290, Glu-304, and Asn-306. The oligomerization domain stretch occupies residues Thr-408–Val-559. Residues Ala-560–Tyr-965 form a carbamoyl phosphate synthetic domain region. The ATP-grasp 2 domain maps to Gly-693 to Leu-884. Positions 729, 768, 770, 775, 800, 801, 802, 803, 843, and 855 each coordinate ATP. Mg(2+)-binding residues include Gln-843, Glu-855, and Asn-857. Mn(2+)-binding residues include Gln-843, Glu-855, and Asn-857. Residues Gly-966–Val-1113 form the MGS-like domain. The allosteric domain stretch occupies residues Gly-966–Arg-1115.

This sequence belongs to the CarB family. Composed of two chains; the small (or glutamine) chain promotes the hydrolysis of glutamine to ammonia, which is used by the large (or ammonia) chain to synthesize carbamoyl phosphate. Tetramer of heterodimers (alpha,beta)4. Mg(2+) is required as a cofactor. Mn(2+) serves as cofactor.

The enzyme catalyses hydrogencarbonate + L-glutamine + 2 ATP + H2O = carbamoyl phosphate + L-glutamate + 2 ADP + phosphate + 2 H(+). It catalyses the reaction hydrogencarbonate + NH4(+) + 2 ATP = carbamoyl phosphate + 2 ADP + phosphate + 2 H(+). Its pathway is amino-acid biosynthesis; L-arginine biosynthesis; carbamoyl phosphate from bicarbonate: step 1/1. The protein operates within pyrimidine metabolism; UMP biosynthesis via de novo pathway; (S)-dihydroorotate from bicarbonate: step 1/3. Large subunit of the glutamine-dependent carbamoyl phosphate synthetase (CPSase). CPSase catalyzes the formation of carbamoyl phosphate from the ammonia moiety of glutamine, carbonate, and phosphate donated by ATP, constituting the first step of 2 biosynthetic pathways, one leading to arginine and/or urea and the other to pyrimidine nucleotides. The large subunit (synthetase) binds the substrates ammonia (free or transferred from glutamine from the small subunit), hydrogencarbonate and ATP and carries out an ATP-coupled ligase reaction, activating hydrogencarbonate by forming carboxy phosphate which reacts with ammonia to form carbamoyl phosphate. The protein is Carbamoyl phosphate synthase large chain of Mycobacterium bovis (strain ATCC BAA-935 / AF2122/97).